We begin with the raw amino-acid sequence, 541 residues long: Metal transporter Nramp1 (541 aa).

Asparagine 17 is a glycosylation site (N-linked (GlcNAc...) asparagine). A run of 10 helical transmembrane segments spans residues 45-65 (LFAY…PGNF), 78-98 (ELLW…SLAA), 122-142 (FILW…EVIG), 153-173 (IPVW…LALQ), 182-202 (LFIA…LGYA), 222-242 (GAAG…NLFL), 271-291 (GFAL…SGAV), 315-335 (FLLE…ALLA), 371-391 (SLAI…GAGK), and 392-412 (LIII…VPLL). The N-linked (GlcNAc...) asparagine glycan is linked to asparagine 426. A run of 2 helical transmembrane segments spans residues 430-450 (ISSI…YYLA) and 465-485 (VAAI…LAGV). N-linked (GlcNAc...) asparagine glycosylation occurs at asparagine 511.

This sequence belongs to the NRAMP (TC 2.A.55) family.

The protein resides in the membrane. In terms of biological role, probable divalent metal transporter. The sequence is that of Metal transporter Nramp1 from Populus trichocarpa (Western balsam poplar).